Reading from the N-terminus, the 188-residue chain is ATP synthase subunit b 1 (188 aa).

The helical transmembrane segment at 7 to 27 (LSVLALAMLAANPAFAAGGGI) threads the bilayer.

Belongs to the ATPase B chain family. F-type ATPases have 2 components, F(1) - the catalytic core - and F(0) - the membrane proton channel. F(1) has five subunits: alpha(3), beta(3), gamma(1), delta(1), epsilon(1). F(0) has three main subunits: a(1), b(2) and c(10-14). The alpha and beta chains form an alternating ring which encloses part of the gamma chain. F(1) is attached to F(0) by a central stalk formed by the gamma and epsilon chains, while a peripheral stalk is formed by the delta and b chains.

Its subcellular location is the cell inner membrane. In terms of biological role, f(1)F(0) ATP synthase produces ATP from ADP in the presence of a proton or sodium gradient. F-type ATPases consist of two structural domains, F(1) containing the extramembraneous catalytic core and F(0) containing the membrane proton channel, linked together by a central stalk and a peripheral stalk. During catalysis, ATP synthesis in the catalytic domain of F(1) is coupled via a rotary mechanism of the central stalk subunits to proton translocation. Its function is as follows. Component of the F(0) channel, it forms part of the peripheral stalk, linking F(1) to F(0). In Roseobacter denitrificans (strain ATCC 33942 / OCh 114) (Erythrobacter sp. (strain OCh 114)), this protein is ATP synthase subunit b 1.